The sequence spans 453 residues: MENEEWKVSVWICQEEKLVSGLTRRTTCADVVRVLLADHNEKQAEEGSMLMGEEGSMLLGPPQCYCIVEKWRGFERILPNKTKILRLWTAWGEEQDNVKFVLVRSEASLPNIGPRSAEAKVVLSKESPCHQRTLSKTSTGPTQDKQRRVVRKAFRKLAKINRKRHETLPKESSSVEKMETLVHLVLSQDHTIRQQVQRIMELDREIERFEARTHFDRMKMHGVNYVQETYLVGTVSEKGSASDSNPPSDQSSQEELFADYAQKCDEVLLLQEQISRQEEAMEQMTVQIQEELNKRWMERRQEELSSKEQESSLSDSGADQGGDESQLLLEQEQVKTELSASLYIGLRLNTDLEAIKADLDYTQKMWDDKEQELQSLLHSLNDLETSGCQDLAEISCEDTSLGVTTTGSPTDSWVEKDLGRPTNCEANDEDSDTGLSSMHSQDSDSGPVCESLV.

The Ras-associating domain occupies 1 to 107; it reads MENEEWKVSV…VKFVLVRSEA (107 aa). Residues 262 to 295 adopt a coiled-coil conformation; it reads QKCDEVLLLQEQISRQEEAMEQMTVQIQEELNKR. The span at 299–310 shows a compositional bias: basic and acidic residues; it reads RRQEELSSKEQE. Disordered regions lie at residues 299-322 and 402-453; these read RRQE…DQGG and GVTT…ESLV. Composition is skewed to polar residues over residues 402-411 and 433-444; these read GVTTTGSPTD and TGLSSMHSQDSD.

It is found in the cytoplasm. The protein resides in the cytosol. Its subcellular location is the cytoskeleton. The protein localises to the microtubule organizing center. It localises to the centrosome. It is found in the spindle pole. May play role in regulating embryonic neurogenesis. The sequence is that of Ras association domain-containing protein 10 (rassf10) from Xenopus laevis (African clawed frog).